The sequence spans 123 residues: Small ribosomal subunit protein uS12 (123 aa).

Residue D89 is modified to 3-methylthioaspartic acid. Residues 104–123 (TAGVQDRRQGRSKYGAKRPK) form a disordered region. Positions 113–123 (GRSKYGAKRPK) are enriched in basic residues.

The protein belongs to the universal ribosomal protein uS12 family. In terms of assembly, part of the 30S ribosomal subunit. Contacts proteins S8 and S17. May interact with IF1 in the 30S initiation complex.

Functionally, with S4 and S5 plays an important role in translational accuracy. Its function is as follows. Interacts with and stabilizes bases of the 16S rRNA that are involved in tRNA selection in the A site and with the mRNA backbone. Located at the interface of the 30S and 50S subunits, it traverses the body of the 30S subunit contacting proteins on the other side and probably holding the rRNA structure together. The combined cluster of proteins S8, S12 and S17 appears to hold together the shoulder and platform of the 30S subunit. The sequence is that of Small ribosomal subunit protein uS12 from Oleidesulfovibrio alaskensis (strain ATCC BAA-1058 / DSM 17464 / G20) (Desulfovibrio alaskensis).